Here is a 345-residue protein sequence, read N- to C-terminus: MHTLTLTRPDDWHLHLRDGEALAAVAAYSAREFARAIVMPNLKPPVTTVVQAAAYRERILAALPPGGPAFEPLMTLYLTDNTPPAEIDRVAESGFVHALKLYPAGATTNSDAGVTSLSGCLPTLTRMAELGVPLLVHGEVTDPQIDVFDREAVFIDTVLQPLLAELPTLRVVMEHITTRQAAEFVLAAPDNIAATVTPQHMLMNRNALFTGGLRPHHYCLPVLKREEHRAAIARAVTSGSTRFFLGTDSAPHARHAKEAACGCAGIFSAHAALPLYAEAFEDAGALDRLEAFASFNGPDFYRLPRNTGTVTLKREEWTVPASLPYGNDTLVPLRAGETLRWQLAG.

2 residues coordinate Zn(2+): His-13 and His-15. Substrate contacts are provided by residues 15-17 (HLR) and Asn-41. Positions 100, 137, and 175 each coordinate Zn(2+). An N6-carboxylysine modification is found at Lys-100. His-137 contacts substrate. Leu-220 is a binding site for substrate. Asp-248 lines the Zn(2+) pocket. The active site involves Asp-248. The substrate site is built by His-252 and Ala-264.

The protein belongs to the metallo-dependent hydrolases superfamily. DHOase family. Class II DHOase subfamily. As to quaternary structure, homodimer. The cofactor is Zn(2+).

It catalyses the reaction (S)-dihydroorotate + H2O = N-carbamoyl-L-aspartate + H(+). The protein operates within pyrimidine metabolism; UMP biosynthesis via de novo pathway; (S)-dihydroorotate from bicarbonate: step 3/3. Catalyzes the reversible cyclization of carbamoyl aspartate to dihydroorotate. The polypeptide is Dihydroorotase (Laribacter hongkongensis (strain HLHK9)).